The following is a 464-amino-acid chain: GDNF family receptor alpha-2 (464 aa).

The N-terminal stretch at 1–21 (MILANVFCLFFFLDETLRSLA) is a signal peptide. 11 cysteine pairs are disulfide-bonded: C40–C93, C95–C105, C161–C222, C168–C174, C185–C200, C195–C241, C224–C229, C251–C323, C258–C264, C275–C293, and C285–C347. An N-linked (GlcNAc...) asparagine glycan is attached at N52. N357 carries N-linked (GlcNAc...) asparagine glycosylation. The segment at 363-392 (VSPKGPSFQATQAPRVEKTPSLPDDLSDST) is disordered. Low complexity predominate over residues 381–392 (TPSLPDDLSDST). An N-linked (GlcNAc...) asparagine glycan is attached at N413. S444 carries the GPI-anchor amidated serine lipid modification. A propeptide spans 445-464 (RARPSAALTVLSVLMLKLAL) (removed in mature form).

This sequence belongs to the GDNFR family. Interacts with NRTN ligand and RET: forms a 2:2:2 ternary complex composed of NRTN ligand, GFRA2 and RET receptor. Also forms a 4:4:4 tetrameric complex composed of 4 copies of NRTN ligand, GFRA2 and RET receptor, which prevents endocytosis of RET. Interacts with SORL1. Found in both brain and placenta.

It localises to the cell membrane. Receptor for neurturin (NRTN), a growth factor that supports the survival of sympathetic neurons. NRTN-binding leads to autophosphorylation and activation of the RET receptor. Also able to mediate GDNF signaling through the RET tyrosine kinase receptor. Functionally, participates in NRTN-induced 'Ser-727' phosphorylation of STAT3. The polypeptide is GDNF family receptor alpha-2 (GFRA2) (Homo sapiens (Human)).